A 41-amino-acid polypeptide reads, in one-letter code: Large ribosomal subunit protein bL36 (41 aa).

This sequence belongs to the bacterial ribosomal protein bL36 family.

This chain is Large ribosomal subunit protein bL36, found in Nitrobacter hamburgensis (strain DSM 10229 / NCIMB 13809 / X14).